A 512-amino-acid polypeptide reads, in one-letter code: Glutathione-binding protein GsiB (512 aa).

The N-terminal stretch at 1-26 is a signal peptide; sequence MTQFITHKWLAALGLASSIAAFPALA.

The protein belongs to the bacterial solute-binding protein 5 family. In terms of assembly, the complex is composed of two ATP-binding proteins (GsiA), two transmembrane proteins (GsiC and GsiD) and a solute-binding protein (GsiB).

It is found in the periplasm. In terms of biological role, part of the ABC transporter complex GsiABCD involved in glutathione import. Binds glutathione. In Salmonella typhimurium (strain LT2 / SGSC1412 / ATCC 700720), this protein is Glutathione-binding protein GsiB.